The chain runs to 108 residues: Nucleoid-associated protein ACP_0492 (108 aa).

It belongs to the YbaB/EbfC family. In terms of assembly, homodimer.

The protein localises to the cytoplasm. Its subcellular location is the nucleoid. Binds to DNA and alters its conformation. May be involved in regulation of gene expression, nucleoid organization and DNA protection. This Acidobacterium capsulatum (strain ATCC 51196 / DSM 11244 / BCRC 80197 / JCM 7670 / NBRC 15755 / NCIMB 13165 / 161) protein is Nucleoid-associated protein ACP_0492.